The primary structure comprises 565 residues: Probable beta-glucosidase btgE (565 aa).

The N-terminal stretch at 1–18 (MRGAILATAAALAGTAMA) is a signal peptide. Residues 246 to 304 (TGQDEPTSAPAAPSTTAVPATTTAAPETTTAAPDTTTAVPSTSSAAPSSSSTAPASTGA) form a disordered region. A compositionally biased stretch (low complexity) spans 251-304 (PTSAPAAPSTTAVPATTTAAPETTTAAPDTTTAVPSTSSAAPSSSSTAPASTGA). The Proton donor role is filled by Glu-405. Catalysis depends on Glu-501, which acts as the Nucleophile.

Belongs to the glycosyl hydrolase 17 family.

The protein localises to the secreted. It localises to the cell wall. It catalyses the reaction Hydrolysis of terminal, non-reducing beta-D-glucosyl residues with release of beta-D-glucose.. The protein operates within glycan metabolism; cellulose degradation. Functionally, beta-glucosidases are one of a number of cellulolytic enzymes involved in the degradation of cellulosic biomass. Catalyzes the last step releasing glucose from the inhibitory cellobiose. This is Probable beta-glucosidase btgE (btgE) from Aspergillus fumigatus (strain CBS 144.89 / FGSC A1163 / CEA10) (Neosartorya fumigata).